The sequence spans 194 residues: dTTP/UTP pyrophosphatase (194 aa).

Aspartate 73 acts as the Proton acceptor in catalysis.

This sequence belongs to the Maf family. YhdE subfamily. Requires a divalent metal cation as cofactor.

Its subcellular location is the cytoplasm. It carries out the reaction dTTP + H2O = dTMP + diphosphate + H(+). The enzyme catalyses UTP + H2O = UMP + diphosphate + H(+). Functionally, nucleoside triphosphate pyrophosphatase that hydrolyzes dTTP and UTP. May have a dual role in cell division arrest and in preventing the incorporation of modified nucleotides into cellular nucleic acids. This is dTTP/UTP pyrophosphatase from Clostridium botulinum (strain Loch Maree / Type A3).